We begin with the raw amino-acid sequence, 398 residues long: Mannitol-1-phosphate 5-dehydrogenase (398 aa).

10-21 (AVHFGAGNIGRG) provides a ligand contact to NAD(+). Lys-221 is a catalytic residue.

It belongs to the mannitol dehydrogenase family. As to quaternary structure, monomer.

The catalysed reaction is D-mannitol 1-phosphate + NAD(+) = beta-D-fructose 6-phosphate + NADH + H(+). Its function is as follows. Catalyzes the NAD(H)-dependent interconversion of D-fructose 6-phosphate and D-mannitol 1-phosphate in the mannitol metabolic pathway. The chain is Mannitol-1-phosphate 5-dehydrogenase from Chaetomium globosum (strain ATCC 6205 / CBS 148.51 / DSM 1962 / NBRC 6347 / NRRL 1970) (Soil fungus).